We begin with the raw amino-acid sequence, 633 residues long: Pentatricopeptide repeat-containing protein At1g43980, mitochondrial (633 aa).

The transit peptide at 1–30 directs the protein to the mitochondrion; it reads MFQLLRRAHGLCMPSSLYFSRLVNRSLLSK. 14 PPR repeats span residues 50-80, 81-111, 112-146, 147-178, 180-210, 211-245, 246-280, 281-311, 312-346, 347-380, 381-411, 412-447, 448-483, and 484-514; these read TTYW…IPDK, NTIT…MPER, DVVS…EIRP, TEFT…GVSR, NLVV…MEDR, DVVS…EIQP, DEYT…GFLS, NSIV…LEKW, DSVL…SVRP, DKFT…GFDL, DTAV…TDGK, DLIF…SLKP, DRVT…GVNP, and GNEH…IPFE. A type E motif region spans residues 519–594; the sequence is IWEPILCASL…AQGSSKISIE (76 aa).

Belongs to the PPR family. PCMP-E subfamily.

It is found in the mitochondrion. The sequence is that of Pentatricopeptide repeat-containing protein At1g43980, mitochondrial (PCMP-E58) from Arabidopsis thaliana (Mouse-ear cress).